The primary structure comprises 510 residues: 2,3-bisphosphoglycerate-independent phosphoglycerate mutase (510 aa).

Mn(2+) is bound by residues Asp13 and Ser63. Residue Ser63 is the Phosphoserine intermediate of the active site. Substrate is bound by residues His124, 154-155, Arg186, Arg192, 262-265, and Lys334; these read RD and RADR. Positions 401, 405, 442, 443, and 461 each coordinate Mn(2+).

It belongs to the BPG-independent phosphoglycerate mutase family. As to quaternary structure, monomer. Mn(2+) is required as a cofactor.

The catalysed reaction is (2R)-2-phosphoglycerate = (2R)-3-phosphoglycerate. The protein operates within carbohydrate degradation; glycolysis; pyruvate from D-glyceraldehyde 3-phosphate: step 3/5. Its function is as follows. Catalyzes the interconversion of 2-phosphoglycerate and 3-phosphoglycerate. This Aliivibrio fischeri (strain MJ11) (Vibrio fischeri) protein is 2,3-bisphosphoglycerate-independent phosphoglycerate mutase.